Here is a 570-residue protein sequence, read N- to C-terminus: Sulfite reductase [NADPH] hemoprotein beta-component (570 aa).

[4Fe-4S] cluster-binding residues include C434, C440, C479, and C483. A siroheme-binding site is contributed by C483.

Belongs to the nitrite and sulfite reductase 4Fe-4S domain family. In terms of assembly, alpha(8)-beta(8). The alpha component is a flavoprotein, the beta component is a hemoprotein. Siroheme serves as cofactor. It depends on [4Fe-4S] cluster as a cofactor.

The catalysed reaction is hydrogen sulfide + 3 NADP(+) + 3 H2O = sulfite + 3 NADPH + 4 H(+). It participates in sulfur metabolism; hydrogen sulfide biosynthesis; hydrogen sulfide from sulfite (NADPH route): step 1/1. Component of the sulfite reductase complex that catalyzes the 6-electron reduction of sulfite to sulfide. This is one of several activities required for the biosynthesis of L-cysteine from sulfate. The chain is Sulfite reductase [NADPH] hemoprotein beta-component from Salmonella arizonae (strain ATCC BAA-731 / CDC346-86 / RSK2980).